The chain runs to 345 residues: L-threonine 3-dehydrogenase (345 aa).

Residue cysteine 39 coordinates Zn(2+). Active-site charge relay system residues include threonine 41 and histidine 44. Residues histidine 64, glutamate 65, cysteine 94, cysteine 97, cysteine 100, and cysteine 108 each contribute to the Zn(2+) site. NAD(+)-binding positions include isoleucine 176, aspartate 196, arginine 201, 263 to 265 (LGI), and 287 to 288 (VY).

Belongs to the zinc-containing alcohol dehydrogenase family. Homotetramer. Zn(2+) is required as a cofactor.

It localises to the cytoplasm. It catalyses the reaction L-threonine + NAD(+) = (2S)-2-amino-3-oxobutanoate + NADH + H(+). The protein operates within amino-acid degradation; L-threonine degradation via oxydo-reductase pathway; glycine from L-threonine: step 1/2. Catalyzes the NAD(+)-dependent oxidation of L-threonine to 2-amino-3-ketobutyrate. This chain is L-threonine 3-dehydrogenase, found in Anaeromyxobacter dehalogenans (strain 2CP-C).